A 544-amino-acid polypeptide reads, in one-letter code: Tyrosine-protein kinase Yes (544 aa).

A lipid anchor (N-myristoyl glycine) is attached at G2. The SH3 domain occupies 92–153 (GGVTFFVALY…PSNYVAPADS (62 aa)). The 98-residue stretch at 159-256 (WYFGKLSRKD…GLCYKLTTVC (98 aa)) folds into the SH2 domain. Residues 278-531 (LRLDVRLGQG…YIQSFLEDYF (254 aa)) enclose the Protein kinase domain. ATP contacts are provided by residues 284–292 (LGQGCFGEV) and K306. The active-site Proton acceptor is D397. Residue Y427 is modified to Phosphotyrosine; by autocatalysis.

This sequence belongs to the protein kinase superfamily. Tyr protein kinase family. SRC subfamily.

It catalyses the reaction L-tyrosyl-[protein] + ATP = O-phospho-L-tyrosyl-[protein] + ADP + H(+). The sequence is that of Tyrosine-protein kinase Yes (yes) from Xiphophorus hellerii (Green swordtail).